The sequence spans 634 residues: Chaperone protein HtpG (634 aa).

Residues 1–344 (MSETATQNKE…SNDLPLNVSR (344 aa)) are a; substrate-binding. Residues 345 to 561 (EILQDNKVTQ…DFEMGTQMAK (217 aa)) form a b region. Residues 562–634 (LLEAAGQAAP…GAINELLTKR (73 aa)) form a c region.

This sequence belongs to the heat shock protein 90 family. Homodimer.

The protein localises to the cytoplasm. Functionally, molecular chaperone. Has ATPase activity. The polypeptide is Chaperone protein HtpG (Vibrio atlanticus (strain LGP32) (Vibrio splendidus (strain Mel32))).